An 876-amino-acid polypeptide reads, in one-letter code: Alanine--tRNA ligase (876 aa).

Positions 565, 569, 667, and 671 each coordinate Zn(2+).

The protein belongs to the class-II aminoacyl-tRNA synthetase family. Zn(2+) serves as cofactor.

The protein localises to the cytoplasm. The enzyme catalyses tRNA(Ala) + L-alanine + ATP = L-alanyl-tRNA(Ala) + AMP + diphosphate. Functionally, catalyzes the attachment of alanine to tRNA(Ala) in a two-step reaction: alanine is first activated by ATP to form Ala-AMP and then transferred to the acceptor end of tRNA(Ala). Also edits incorrectly charged Ser-tRNA(Ala) and Gly-tRNA(Ala) via its editing domain. This chain is Alanine--tRNA ligase, found in Staphylococcus aureus (strain Mu3 / ATCC 700698).